The sequence spans 129 residues: Small ribosomal subunit protein uS11 (129 aa).

It belongs to the universal ribosomal protein uS11 family. In terms of assembly, part of the 30S ribosomal subunit. Interacts with proteins S7 and S18. Binds to IF-3.

Functionally, located on the platform of the 30S subunit, it bridges several disparate RNA helices of the 16S rRNA. Forms part of the Shine-Dalgarno cleft in the 70S ribosome. The polypeptide is Small ribosomal subunit protein uS11 (Vibrio campbellii (strain ATCC BAA-1116)).